The sequence spans 129 residues: Large ribosomal subunit protein bL21 (129 aa).

Residues 102 to 129 (TDNAKPTKGPRPKKEKVAKEATKEDAAA) form a disordered region. Positions 116–129 (EKVAKEATKEDAAA) are enriched in basic and acidic residues.

It belongs to the bacterial ribosomal protein bL21 family. As to quaternary structure, part of the 50S ribosomal subunit. Contacts protein L20.

This protein binds to 23S rRNA in the presence of protein L20. The protein is Large ribosomal subunit protein bL21 of Bradyrhizobium diazoefficiens (strain JCM 10833 / BCRC 13528 / IAM 13628 / NBRC 14792 / USDA 110).